The chain runs to 1209 residues: MGTELMRICVKEDSDDLPSVPPGFESYATFTLKRVVPATTSDKAKTPAIESVSATEQAKMEVESDEAKAARALRRRPWINHSGCDDDGDCAANNDNAASQNPDQNCDVKPALPKGVVRGCEECKDCQKVTARWHPDEARRPDLEDAPVFYPSEEEFEDTLNYIAKIRPEAEKYGICRIVPPPSWKPPCPLKEKQVWEGSKFTTRVQRVDKLQNRSSMKKISKLPNQMRKKKRKCMKMGMDSVTNGMGDPCSASTGMNELETFGFEPGPGFTLKDFQKYADEFKAQYFKKSETSTDDKCKVDNSIDCWEPALEDVEGEYWRIVDKATEEIEVLYGADLETGVFGSGFPKISSSHNASSSEDKYAKSGWNLNNFPRLPGSLLKYEGSDISGVLVPWLYIGMCFSSFCWHVEDHHLYSLNYMHWGAPKLWYGVGGKDAVKLEEAMRKHLPDLFEEQPDLLHKLVTQLSPSKLKTAGVPVHRCVQHAGEFVLTFPRAYHAGFNSGFNCAEAVNVAPVDWLPHGQIAIELYCQQGRKTSISHDKLLLGAAREVVKADWELNLLRKNTVDNLRWKAFSAKDGILAKTLKARIDMERTRREFLCNSSLALKMHSNFDATNERECCICFFDLHLSAAGCRCSPEKYSCLTHVKELCSCPWVTKYFLFRYDIDELNVLVEAVEGKLSSVYRWARQDLGLALSTDVSGSKMEIDEEGKVHKDPTPQTTALSGKDLQLKVTSKEVSKELEKTSKLSHVNLLLKEKEEQITSSHCMKPVKEETVCDSSDPNVSACQPSEGGIICMTAVKSASGKKNSQSLPNDVILLSDDEYDIPRKRGSVRRDAISSGKKLEIRERPTHVLALEASAKIAAPICQREGDSLRDTRNTISLPTNDQKTMRRDVPSSTSHAEVNAEATGLTQDICNRMATNSHGGGKPTSCKSKNSGGLAIVDVVDGTRSSSGTPSCSQNNSPDRFIRQKGPRIAKVVRRINCNVEPLSYGCVLSGKSWCSRRAIFPKGFRSRVKYINILDPTNMCFYISEILDAGRNSPLFMVYLESNPSEVFVHMSPTRCWEMVRERVNQEITKQHKAGKSDLPPLQPSGSPDGFEMFGYSSPAIVQAIEALDVNRVCTDYWDSRPYSRPQVQFPANPLLREANTSGRSNVGNLQLNPGHHISPTGINSILKVLFKKASMEELSSLQEVLSETNSDMVTELVKEEIQNRR.

The 42-residue stretch at 146 to 187 (APVFYPSEEEFEDTLNYIAKIRPEAEKYGICRIVPPPSWKPP) folds into the JmjN domain. A Nuclear localization signal motif is present at residues 217–224 (MKKISKLP). One can recognise a JmjC domain in the interval 361 to 527 (KYAKSGWNLN…HGQIAIELYC (167 aa)). The Fe cation site is built by H407, E409, and H495. 8 residues coordinate Zn(2+): C617, C620, C631, C633, C640, H643, C648, and C650. The C5HC2 zinc finger occupies 617–667 (CCICFFDLHLSAAGCRCSPEKYSCLTHVKELCSCPWVTKYFLFRYDIDELN). Residues 872 to 900 (DTRNTISLPTNDQKTMRRDVPSSTSHAEV) are disordered. Positions 875 to 884 (NTISLPTNDQ) are enriched in polar residues. Residues 974-1032 (VVRRINCNVEPLSYGCVLSGKSWCSRRAIFPKGFRSRVKYINILDPTNMCFYISEILDA) enclose the FYR N-terminal domain. The 91-residue stretch at 1034-1124 (RNSPLFMVYL…RVCTDYWDSR (91 aa)) folds into the FYR C-terminal domain.

It belongs to the JARID1 histone demethylase family. In terms of assembly, interacts with MMD1 in the nucleus of male meiocytes, especially on pachytene chromosomes. The cofactor is Fe(2+). As to expression, confined to inflorescences.

Its subcellular location is the nucleus. The catalysed reaction is N(6),N(6),N(6)-trimethyl-L-lysyl(4)-[histone H3] + 2-oxoglutarate + O2 = N(6),N(6)-dimethyl-L-lysyl(4)-[histone H3] + formaldehyde + succinate + CO2. It catalyses the reaction N(6),N(6)-dimethyl-L-lysyl(4)-[histone H3] + 2-oxoglutarate + O2 = N(6)-methyl-L-lysyl(4)-[histone H3] + formaldehyde + succinate + CO2. It carries out the reaction N(6)-methyl-L-lysyl(4)-[histone H3] + 2-oxoglutarate + O2 = L-lysyl(4)-[histone H3] + formaldehyde + succinate + CO2. Its function is as follows. Functions as a histone H3 'Lys-4' (H3K4me) demethylase involved in the negative regulation of gene expression. Active on H3K4me1, H3K4me2 and H3K4me3. Not active on mono-, di- and trimethylated H3K9, H3K27 and H3K36 in somatic cells. However, also active on H3K9 when in complex with MMD1, a meiocyte-specific histone reader. Together with MMD1, promotes gene expression in male meiocytes in an H3K9me3-dependent manner, and contributes to meiotic chromosome condensation by triggering some condensin promoters (e.g. CAP-D3 and CAP-H). Together with JMJ14 and JMJ17, required for plant growth and development. Represses leaf senescence in an age-dependent manner by demethylating H3K4me3 activating histone marks at senescence-associated genes (SAGs) loci, including WRKY53 and SAG201, thus preventing their premature expression. The protein is Putative lysine-specific demethylase JMJ16 of Arabidopsis thaliana (Mouse-ear cress).